The primary structure comprises 515 residues: Bifunctional purine biosynthesis protein PurH (515 aa).

In terms of domain architecture, MGS-like spans 1 to 145 (MTKRVLISVS…KNHASVTVVV (145 aa)).

The protein belongs to the PurH family.

The enzyme catalyses (6R)-10-formyltetrahydrofolate + 5-amino-1-(5-phospho-beta-D-ribosyl)imidazole-4-carboxamide = 5-formamido-1-(5-phospho-D-ribosyl)imidazole-4-carboxamide + (6S)-5,6,7,8-tetrahydrofolate. The catalysed reaction is IMP + H2O = 5-formamido-1-(5-phospho-D-ribosyl)imidazole-4-carboxamide. Its pathway is purine metabolism; IMP biosynthesis via de novo pathway; 5-formamido-1-(5-phospho-D-ribosyl)imidazole-4-carboxamide from 5-amino-1-(5-phospho-D-ribosyl)imidazole-4-carboxamide (10-formyl THF route): step 1/1. The protein operates within purine metabolism; IMP biosynthesis via de novo pathway; IMP from 5-formamido-1-(5-phospho-D-ribosyl)imidazole-4-carboxamide: step 1/1. The polypeptide is Bifunctional purine biosynthesis protein PurH (Streptococcus pneumoniae (strain 70585)).